Consider the following 419-residue polypeptide: Serine/threonine-protein kinase Kist (419 aa).

The Protein kinase domain maps to 23-304; that stretch reads WQVQSRLGSG…AEMALCSPFF (282 aa). ATP-binding positions include 29-37 and lysine 54; that span reads LGSGSSASV. Residues aspartate 141 and aspartate 158 each act as proton acceptor in the active site. In terms of domain architecture, RRM spans 324 to 406; the sequence is RLLNVLDDDY…KFVVATFYPL (83 aa).

Belongs to the protein kinase superfamily. Ser/Thr protein kinase family. Interacts with stathmin, PAM and CDKN1B/p27Kip1.

The protein localises to the nucleus. The enzyme catalyses L-seryl-[protein] + ATP = O-phospho-L-seryl-[protein] + ADP + H(+). The catalysed reaction is L-threonyl-[protein] + ATP = O-phospho-L-threonyl-[protein] + ADP + H(+). Its function is as follows. Upon serum stimulation, phosphorylates CDKN1B/p27Kip1, thus controlling CDKN1B subcellular location and cell cycle progression in G1 phase. May be involved in trafficking and/or processing of RNA. In Pongo abelii (Sumatran orangutan), this protein is Serine/threonine-protein kinase Kist (UHMK1).